Here is a 188-residue protein sequence, read N- to C-terminus: Elongation factor P (188 aa).

The protein belongs to the elongation factor P family.

Its subcellular location is the cytoplasm. The protein operates within protein biosynthesis; polypeptide chain elongation. In terms of biological role, involved in peptide bond synthesis. Stimulates efficient translation and peptide-bond synthesis on native or reconstituted 70S ribosomes in vitro. Probably functions indirectly by altering the affinity of the ribosome for aminoacyl-tRNA, thus increasing their reactivity as acceptors for peptidyl transferase. The polypeptide is Elongation factor P (efp) (Ureaplasma parvum serovar 3 (strain ATCC 700970)).